A 216-amino-acid polypeptide reads, in one-letter code: Probable GTP-binding protein EngB (216 aa).

An EngB-type G domain is found at P26 to E210. GTP-binding positions include G34–S41, G59–K63, D76–G79, N156–D159, and I189–A191. The Mg(2+) site is built by S41 and T61.

It belongs to the TRAFAC class TrmE-Era-EngA-EngB-Septin-like GTPase superfamily. EngB GTPase family. It depends on Mg(2+) as a cofactor.

Functionally, necessary for normal cell division and for the maintenance of normal septation. The chain is Probable GTP-binding protein EngB from Pyrococcus horikoshii (strain ATCC 700860 / DSM 12428 / JCM 9974 / NBRC 100139 / OT-3).